The primary structure comprises 432 residues: Delta-aminolevulinic acid dehydratase, chloroplastic (432 aa).

Residues 84 to 113 (AAPPVPAKPSAPEGTPAISPLVMPARPRRN) are disordered. Lysine 300 functions as the Schiff-base intermediate with substrate in the catalytic mechanism. Residues arginine 310 and lysine 322 each coordinate 5-aminolevulinate. Glutamate 338 serves as a coordination point for Mg(2+). The Schiff-base intermediate with substrate role is filled by lysine 353. 5-aminolevulinate is bound by residues serine 379 and tyrosine 418.

It belongs to the ALAD family. Homooctamer. The cofactor is Mg(2+).

It is found in the plastid. It localises to the chloroplast. It carries out the reaction 2 5-aminolevulinate = porphobilinogen + 2 H2O + H(+). The protein operates within porphyrin-containing compound metabolism; protoporphyrin-IX biosynthesis; coproporphyrinogen-III from 5-aminolevulinate: step 1/4. In terms of biological role, catalyzes an early step in the biosynthesis of tetrapyrroles. Binds two molecules of 5-aminolevulinate per subunit, each at a distinct site, and catalyzes their condensation to form porphobilinogen. The protein is Delta-aminolevulinic acid dehydratase, chloroplastic (HEMB) of Physcomitrium patens (Spreading-leaved earth moss).